Reading from the N-terminus, the 731-residue chain is Cucumisin (731 aa).

The N-terminal stretch at 1–22 (MSSSLIFKLFFFSLFFSNRLAS) is a signal peptide. Positions 23–110 (RLDSDDDGKN…VFLNEMNELH (88 aa)) are cleaved as a propeptide — activation peptide. An Inhibitor I9 domain is found at 34–110 (YIVYMGRKLE…VFLNEMNELH (77 aa)). The region spanning 114 to 584 (SWDFLGFPLT…SGHVNPLKAV (471 aa)) is the Peptidase S8 domain. The active-site Charge relay system is the Asp140. Cysteines 166 and 174 form a disulfide. The active-site Charge relay system is the His204. 2 disulfide bridges follow: Cys245-Cys250 and Cys380-Cys397. N-linked (GlcNAc...) asparagine glycosylation occurs at Asn466. The active-site Charge relay system is the Ser525. A propeptide spanning residues 616–731 (GDYSACTSGN…RSPITITSLV (116 aa)) is cleaved from the precursor. An N-linked (GlcNAc...) asparagine glycan is attached at Asn652.

It belongs to the peptidase S8 family. As to quaternary structure, monomer and dimer. The C-terminal propeptide is autocleaved. As to expression, specifically expressed in fruits. Expressed in sarcocarp (at protein level).

The protein resides in the secreted. The catalysed reaction is Hydrolysis of proteins with broad specificity.. The chain is Cucumisin from Cucumis melo (Muskmelon).